We begin with the raw amino-acid sequence, 1151 residues long: Zinc finger protein ZFPM2 (1151 aa).

Residues 1 to 13 (MSRRKQSKPRQIK) are compositionally biased toward basic residues. Residues 1–102 (MSRRKQSKPR…ETDDWDGPGE (102 aa)) form a disordered region. Composition is skewed to acidic residues over residues 18 to 33 (DAIEDEEEECPSEETD) and 70 to 82 (EGIQETAESDGDT). Residues 244 to 277 (IVNKDIFPCKSCGIWYRSERNLQAHLMYYCSGRQ) form a CCHC FOG-type 1 zinc finger. The Zn(2+) site is built by Cys252, Cys255, His268, and Cys273. The C2H2-type 1 zinc finger occupies 296-320 (SLCPFPQCTKSFSNARALEMHLNSH). Lys324 is covalently cross-linked (Glycyl lysine isopeptide (Lys-Gly) (interchain with G-Cter in SUMO1)). 2 C2H2-type zinc fingers span residues 335 to 357 (LKCTVCSYTADSVINFHQHLFSH) and 363 to 385 (FRCNHCHFGFQTQRELLQHQELH). The disordered stretch occupies residues 389-487 (GKLPRESDME…RLASSPVQPN (99 aa)). 2 stretches are compositionally biased toward polar residues: residues 401-410 (PSATEDSLQP) and 419-431 (ELPQSQKAMQTKD). Residue Lys444 forms a Glycyl lysine isopeptide (Lys-Gly) (interchain with G-Cter in SUMO2) linkage. The span at 447 to 485 (LFLTNQRPEIQPTTNKQSFSYTKIKSEPSSPRLASSPVQ) shows a compositional bias: polar residues. A Glycyl lysine isopeptide (Lys-Gly) (interchain with G-Cter in SUMO1) cross-link involves residue Lys471. At Ser532 the chain carries Phosphoserine. The CCHC FOG-type 2 zinc-finger motif lies at 542–575 (PLMPKGATCFECNITFNNLDNYLVHKKHYCSSRW). Cys550, Cys553, His566, and Cys571 together coordinate Zn(2+). Residue Ser581 is modified to Phosphoserine. Residues 636 to 683 (GPNGKGHDKDFSTQTKKLSTSSNNDDKINGKPVDVKNPSVPLVDGESD) are disordered. The span at 647–658 (STQTKKLSTSSN) shows a compositional bias: polar residues. The CCHC FOG-type 3 zinc-finger motif lies at 681 to 714 (ESDPNKTTCEACNITFSRHETYMVHKQYYCATRH). 4 residues coordinate Zn(2+): Cys689, Cys692, His705, and Cys710. A Nuclear localization signal motif is present at residues 736–740 (RKRRK). Residues 829–835 (PIDLSKK) form an interaction with CTBP2 region. The CCHC FOG-type 4 zinc finger occupies 848–881 (KRLLDYHECTVCKISFNKVENYLAHKQNFCPVTA). Zn(2+)-binding residues include Cys856, Cys859, His872, and Cys877. Ser904 is modified (phosphoserine). Residues Lys915 and Lys955 each participate in a glycyl lysine isopeptide (Lys-Gly) (interchain with G-Cter in SUMO1) cross-link. At Ser1014 the chain carries Phosphoserine. The segment at 1051–1095 (DERPAANPQQENISQNPQHEDDHKSPSWISENPLAANENVSPGIP) is disordered. Polar residues predominate over residues 1057 to 1067 (NPQQENISQNP). The CCHC FOG-type 5 zinc-finger motif lies at 1113–1146 (QAPTSGKYCRLCDIQFNNLSNFITHKKFYCSSHA). Cys1121, Cys1124, His1137, and Cys1142 together coordinate Zn(2+).

It belongs to the FOG (Friend of GATA) family. As to quaternary structure, interacts with the N-terminal zinc-finger of GATA4, GATA5 and probably GATA6. Interacts with retinoid nuclear receptor RXRA when ligand bound. Interacts with corepressor CTBP2; this interaction is however not essential for corepressor activity. Able to bind GATA1 in vitro. Interacts with NR2F2 and NR2F6. Interacts with ATOH8; mediates indirect interaction with GATA4. Sumoylation reduces transcriptional repression activity. In terms of tissue distribution, widely expressed at low level.

The protein localises to the nucleus. In terms of biological role, transcription regulator that plays a central role in heart morphogenesis and development of coronary vessels from epicardium, by regulating genes that are essential during cardiogenesis. Essential cofactor that acts via the formation of a heterodimer with transcription factors of the GATA family GATA4, GATA5 and GATA6. Such heterodimer can both activate or repress transcriptional activity, depending on the cell and promoter context. Also required in gonadal differentiation, possibly be regulating expression of SRY. Probably acts a corepressor of NR2F2. This chain is Zinc finger protein ZFPM2 (ZFPM2), found in Homo sapiens (Human).